A 460-amino-acid polypeptide reads, in one-letter code: MATGKIIQVIGAVVDVEFPQDAVPKVYDALEVENGAEKLVLEVQQQLGGGIVRCIAMGSSDGLRRGLNVNNLDHPIEVPVGKATLGRIMNVLGEPIDMKGDIGEEERWAIHRAAPSYEELSNSQELLETGIKVIDLMCPFAKGGKVGLFGGAGVGKTVNMMELIRNIAIEHSGYSVFAGVGERTREGNDFYHEMTDSNVIDKVSLVYGQMNEPPGNRLRVALTGLTMAEKFRDEGRDVLLFVDNIYRYTLAGTEVSALLGRMPSAVGYQPTLAEEMGVLQERITSTKTGSITSVQAVYVPADDLTDPSPATTFAHLDATVVLSRQIASLGIYPAVDPLDSTSRQLDPLVVGQEHYDVARGVQSILQRYQELKDIIAILGMDELSEEDKLVVSRARKIQRFLSQPFFVAEVFTGSPGKYVALKDTIRGFKGIMEGEYDHLPEQAFYMVGSIDEVVEKAKKL.

ATP is bound at residue 150–157; sequence GGAGVGKT.

Belongs to the ATPase alpha/beta chains family. F-type ATPases have 2 components, CF(1) - the catalytic core - and CF(0) - the membrane proton channel. CF(1) has five subunits: alpha(3), beta(3), gamma(1), delta(1), epsilon(1). CF(0) has three main subunits: a(1), b(2) and c(9-12). The alpha and beta chains form an alternating ring which encloses part of the gamma chain. CF(1) is attached to CF(0) by a central stalk formed by the gamma and epsilon chains, while a peripheral stalk is formed by the delta and b chains.

The protein resides in the cell inner membrane. The enzyme catalyses ATP + H2O + 4 H(+)(in) = ADP + phosphate + 5 H(+)(out). Produces ATP from ADP in the presence of a proton gradient across the membrane. The catalytic sites are hosted primarily by the beta subunits. The sequence is that of ATP synthase subunit beta from Pectobacterium carotovorum subsp. carotovorum (strain PC1).